Consider the following 271-residue polypeptide: Hydroxyethylthiazole kinase (271 aa).

M50 is a binding site for substrate. ATP-binding residues include R126 and T172. A substrate-binding site is contributed by G199.

The protein belongs to the Thz kinase family. Mg(2+) serves as cofactor.

The catalysed reaction is 5-(2-hydroxyethyl)-4-methylthiazole + ATP = 4-methyl-5-(2-phosphooxyethyl)-thiazole + ADP + H(+). It functions in the pathway cofactor biosynthesis; thiamine diphosphate biosynthesis; 4-methyl-5-(2-phosphoethyl)-thiazole from 5-(2-hydroxyethyl)-4-methylthiazole: step 1/1. Catalyzes the phosphorylation of the hydroxyl group of 4-methyl-5-beta-hydroxyethylthiazole (THZ). In Akkermansia muciniphila (strain ATCC BAA-835 / DSM 22959 / JCM 33894 / BCRC 81048 / CCUG 64013 / CIP 107961 / Muc), this protein is Hydroxyethylthiazole kinase.